The chain runs to 186 residues: Protein C (186 aa).

The span at 1-15 (MSKTDWNASGLSRPS) shows a compositional bias: polar residues. Residues 1–45 (MSKTDWNASGLSRPSPSAHWPSRKPWQHGQKYQTTQDRTEPPARK) form a disordered region.

It belongs to the morbillivirus protein C family. In terms of assembly, interacts with the phosphoprotein (via C-terminus); this interaction allows C to associate with the ribonucleocapsid.

It is found in the host nucleus. The protein localises to the host cytoplasmic vesicle. In terms of biological role, ribonucleocapsid-associated protein that interacts with the phosphoprotein (P), thereby increasing replication accuracy and processivity of the polymerase complex. In Homo sapiens (Human), this protein is Protein C (P/V/C).